The sequence spans 389 residues: Probable dual-specificity RNA methyltransferase RlmN (389 aa).

The Proton acceptor role is filled by E114. Residues 120-358 (QHYGLSVCVT…CVVRQEHGTD (239 aa)) form the Radical SAM core domain. C127 and C363 are oxidised to a cystine. [4Fe-4S] cluster-binding residues include C134, C138, and C141. Residues 186 to 187 (GE), S218, 241 to 243 (SLH), and N319 contribute to the S-adenosyl-L-methionine site. C363 functions as the S-methylcysteine intermediate in the catalytic mechanism. The interval 370–389 (TMKRDRQKAVAEASGKSEGK) is disordered. The span at 371 to 389 (MKRDRQKAVAEASGKSEGK) shows a compositional bias: basic and acidic residues.

The protein belongs to the radical SAM superfamily. RlmN family. It depends on [4Fe-4S] cluster as a cofactor.

It localises to the cytoplasm. It catalyses the reaction adenosine(2503) in 23S rRNA + 2 reduced [2Fe-2S]-[ferredoxin] + 2 S-adenosyl-L-methionine = 2-methyladenosine(2503) in 23S rRNA + 5'-deoxyadenosine + L-methionine + 2 oxidized [2Fe-2S]-[ferredoxin] + S-adenosyl-L-homocysteine. The catalysed reaction is adenosine(37) in tRNA + 2 reduced [2Fe-2S]-[ferredoxin] + 2 S-adenosyl-L-methionine = 2-methyladenosine(37) in tRNA + 5'-deoxyadenosine + L-methionine + 2 oxidized [2Fe-2S]-[ferredoxin] + S-adenosyl-L-homocysteine. In terms of biological role, specifically methylates position 2 of adenine 2503 in 23S rRNA and position 2 of adenine 37 in tRNAs. This Streptococcus thermophilus (strain ATCC BAA-250 / LMG 18311) protein is Probable dual-specificity RNA methyltransferase RlmN.